The chain runs to 396 residues: Elongation factor Tu (396 aa).

The tr-type G domain maps to 10 to 206; sequence KLHVNVGTIG…ALDTHIPNPE (197 aa). Residues 19-26 are G1; it reads GHVDHGKT. Residue 19–26 coordinates GTP; that stretch reads GHVDHGKT. T26 contributes to the Mg(2+) binding site. Positions 60–64 are G2; the sequence is GITIS. The segment at 81-84 is G3; it reads DCPG. Residues 81 to 85 and 136 to 139 each bind GTP; these read DCPGH and NKAD. The segment at 136–139 is G4; the sequence is NKAD. Positions 174-176 are G5; it reads SAL.

The protein belongs to the TRAFAC class translation factor GTPase superfamily. Classic translation factor GTPase family. EF-Tu/EF-1A subfamily. As to quaternary structure, monomer.

It is found in the cytoplasm. The enzyme catalyses GTP + H2O = GDP + phosphate + H(+). Functionally, GTP hydrolase that promotes the GTP-dependent binding of aminoacyl-tRNA to the A-site of ribosomes during protein biosynthesis. This Xylella fastidiosa (strain 9a5c) protein is Elongation factor Tu.